The primary structure comprises 140 residues: Large ribosomal subunit protein uL14 (140 aa).

It belongs to the universal ribosomal protein uL14 family.

In Drosophila melanogaster (Fruit fly), this protein is Large ribosomal subunit protein uL14 (RpL23).